The primary structure comprises 445 residues: Oxysterols receptor LXR-alpha (445 aa).

Disordered stretches follow at residues 1–34 (MSLW…QGGN) and 63–86 (ALLP…KKGP). The transactivation AF-1; required for ligand-independent transactivation function stretch occupies residues 1 to 94 (MSLWLEASMP…GPAPKMLGNE (94 aa)). The segment at residues 93 to 168 (NELCSVCGDK…AGMREECVLS (76 aa)) is a DNA-binding region (nuclear receptor). 2 NR C4-type zinc fingers span residues 96–116 (CSVC…CEGC) and 132–156 (CHSG…LRKC). Serine 191 carries the post-translational modification Phosphoserine. Residues 203 to 445 (QLSPEQLGMI…LLSEIWDVHE (243 aa)) form a transactivation AF-2; required for ligand-dependent transactivation function; mediates interaction with CCAR2 region. An NR LBD domain is found at 207–445 (EQLGMIEKLV…LLSEIWDVHE (239 aa)).

This sequence belongs to the nuclear hormone receptor family. NR1 subfamily. Heterodimer of NR1H3 and RXR (retinoic acid receptor). Interacts with CCAR2 (via N-terminus) in a ligand-independent manner. Interacts with SIRT1 and this interaction is inhibited by CCAR2. In terms of processing, ubiquitinated. Ubiquitination by UBR5 leads to its degradation: UBR5 specifically recognizes and binds ligand-bound NR1H3 when it is not associated with coactivators (NCOAs). In presence of NCOAs, the UBR5-degron is not accessible, preventing its ubiquitination and degradation.

It is found in the nucleus. Its subcellular location is the cytoplasm. Nuclear receptor that exhibits a ligand-dependent transcriptional activation activity. Interaction with retinoic acid receptor (RXR) shifts RXR from its role as a silent DNA-binding partner to an active ligand-binding subunit in mediating retinoid responses through target genes defined by LXRES. LXRES are DR4-type response elements characterized by direct repeats of two similar hexanuclotide half-sites spaced by four nucleotides. Plays an important role in the regulation of cholesterol homeostasis, regulating cholesterol uptake through MYLIP-dependent ubiquitination of LDLR, VLDLR and LRP8. Interplays functionally with RORA for the regulation of genes involved in liver metabolism. Induces LPCAT3-dependent phospholipid remodeling in endoplasmic reticulum (ER) membranes of hepatocytes, driving SREBF1 processing and lipogenesis. Via LPCAT3, triggers the incorporation of arachidonate into phosphatidylcholines of ER membranes, increasing membrane dynamics and enabling triacylglycerols transfer to nascent very low-density lipoprotein (VLDL) particles. Via LPCAT3 also counteracts lipid-induced ER stress response and inflammation, likely by modulating SRC kinase membrane compartmentalization and limiting the synthesis of lipid inflammatory mediators. This is Oxysterols receptor LXR-alpha (Nr1h3) from Mus musculus (Mouse).